The following is a 195-amino-acid chain: Phosphoheptose isomerase (195 aa).

The 161-residue stretch at 35-195 (IVSKILQAGN…IVEYNLFKME (161 aa)) folds into the SIS domain. 51–53 (NGG) is a substrate binding site. His-60 and Glu-64 together coordinate Zn(2+). Substrate contacts are provided by residues Glu-64, 95–96 (ND), 121–123 (STS), Ser-126, and Gln-173. Zn(2+) is bound by residues Gln-173 and His-181.

This sequence belongs to the SIS family. GmhA subfamily. Requires Zn(2+) as cofactor.

The protein localises to the cytoplasm. It carries out the reaction 2 D-sedoheptulose 7-phosphate = D-glycero-alpha-D-manno-heptose 7-phosphate + D-glycero-beta-D-manno-heptose 7-phosphate. It functions in the pathway carbohydrate biosynthesis; D-glycero-D-manno-heptose 7-phosphate biosynthesis; D-glycero-alpha-D-manno-heptose 7-phosphate and D-glycero-beta-D-manno-heptose 7-phosphate from sedoheptulose 7-phosphate: step 1/1. Functionally, catalyzes the isomerization of sedoheptulose 7-phosphate in D-glycero-D-manno-heptose 7-phosphate. The chain is Phosphoheptose isomerase from Leptospira interrogans serogroup Icterohaemorrhagiae serovar copenhageni (strain Fiocruz L1-130).